A 111-amino-acid polypeptide reads, in one-letter code: Cytochrome c2 (111 aa).

Heme c contacts are provided by Cys14, Cys17, His18, and Met83.

It belongs to the cytochrome c family. In terms of processing, binds 1 heme c group covalently per subunit.

Functionally, cytochrome c2 is found mainly in purple, non-sulfur, photosynthetic bacteria where it functions as the electron donor to the oxidized bacteriochlorophyll in the photophosphorylation pathway. However, it may also have a role in the respiratory chain and is found in some non-photosynthetic bacteria. The sequence is that of Cytochrome c2 from Agrobacterium tumefaciens (strain II Chrys).